Here is a 725-residue protein sequence, read N- to C-terminus: Glutamine-dependent NAD(+) synthetase (725 aa).

Positions 4–274 (LKVATCNLNQ…VEVIISQVDL (271 aa)) constitute a CN hydrolase domain. The active-site Proton acceptor; for glutaminase activity is the E44. The For glutaminase activity role is filled by K113. The active-site Nucleophile; for glutaminase activity is the C174. Residues 324 to 709 (YHSPQEEIAF…FPEEEANSNK (386 aa)) are ligase. 354–361 (PLSGGADS) contributes to the ATP binding site. S356 is a catalytic residue.

The protein in the C-terminal section; belongs to the NAD synthetase family.

The catalysed reaction is deamido-NAD(+) + L-glutamine + ATP + H2O = L-glutamate + AMP + diphosphate + NAD(+) + H(+). Its pathway is cofactor biosynthesis; NAD(+) biosynthesis; NAD(+) from deamido-NAD(+) (L-Gln route): step 1/1. In Arabidopsis thaliana (Mouse-ear cress), this protein is Glutamine-dependent NAD(+) synthetase.